Here is a 641-residue protein sequence, read N- to C-terminus: Pumilio homolog 24 (641 aa).

A disordered region spans residues 1-82 (MSSKGLKPQK…LTEARKKKRK (82 aa)). Positions 9–404 (QKSTKRKDTD…RPLLQLLHPN (396 aa)) constitute a PUM-HD domain. 2 stretches are compositionally biased toward basic and acidic residues: residues 14 to 27 (RKDT…DSLK) and 67 to 76 (RVQAKELTEA). Pumilio repeat units lie at residues 118–153 (KMKG…VLFT), 154–189 (ELQP…ACIS), 190–225 (SLRG…ELLA), 303–340 (QLLT…KIIK), and 341–378 (AMKE…IIVR). Positions 427–468 (MDKSETSSKTKDTDGNEIGEETKDEQEDTVAEHSDHEENVTA) are disordered. Over residues 428–440 (DKSETSSKTKDTD) the composition is skewed to basic and acidic residues. Positions 441-455 (GNEIGEETKDEQEDT) are enriched in acidic residues. The segment covering 456-468 (VAEHSDHEENVTA) has biased composition (basic and acidic residues).

The protein localises to the nucleus. It localises to the nucleolus. Sequence-specific RNA-binding protein that regulates translation and mRNA stability by binding the 3'-UTR of target mRNAs. This Arabidopsis thaliana (Mouse-ear cress) protein is Pumilio homolog 24 (APUM24).